Reading from the N-terminus, the 278-residue chain is Short-chain dehydrogenase/reductase eupG (278 aa).

Positions 19, 71, and 98 each coordinate NADP(+). The active-site Proton donor is the S155. NADP(+) is bound by residues Y188, K192, and T223. The Proton acceptor role is filled by Y188. Catalysis depends on K192, which acts as the Lowers pKa of active site Tyr.

Belongs to the short-chain dehydrogenases/reductases (SDR) family.

Its pathway is secondary metabolite biosynthesis; terpenoid biosynthesis. Functionally, short-chain dehydrogenase/reductase; part of the gene cluster that mediates the biosynthesis of eupenifeldin, a bistropolone meroterpenoid that acts as an antitumor agent. The first step of eupenifeldin biosynthesis is the biosynthesis of 3-methylorcinaldehyde performed by the non-reducing polyketide synthase eupA. Oxidative dearomatization of 3-methylorcinaldehyde likely catalyzed by the FAD-dependent monooxygenase eupB is followed by oxidative ring expansion by the 2-oxoglutarate-dependent dioxygenase eupC to provide the first tropolone metabolite, tropolone stipitaldehyde. In parallel, generation of sesquiterpene alpha-humulene from farnesylpyrophosphate (FPP) is catalyzed by the terpene cyclase eupE. The cytochrome P450 monooxygenase eupD then hydroxylates humulene to humulenol. The putative Diels-Alderase eupF probably catalyzes the formation of the tropolone-humulene skeleton by linking humulenol and the polyketide moiety. The short-chain dehydrogenase/reductase eupG and the flavin-dependent monooxygenase eupH are also essential for eupenifeldin biosynthesis and are likely the additional decorating enzymes of the tropolone-humulene skeleton to produce final eupenifeldin or derivatives. The chain is Short-chain dehydrogenase/reductase eupG from Phoma sp.